The sequence spans 502 residues: Aspartyl/glutamyl-tRNA(Asn/Gln) amidotransferase subunit B (502 aa).

A disordered region spans residues 272 to 293; it reads TRHWHEDTRSTTSGRPKSDADD.

This sequence belongs to the GatB/GatE family. GatB subfamily. As to quaternary structure, heterotrimer of A, B and C subunits.

The enzyme catalyses L-glutamyl-tRNA(Gln) + L-glutamine + ATP + H2O = L-glutaminyl-tRNA(Gln) + L-glutamate + ADP + phosphate + H(+). The catalysed reaction is L-aspartyl-tRNA(Asn) + L-glutamine + ATP + H2O = L-asparaginyl-tRNA(Asn) + L-glutamate + ADP + phosphate + 2 H(+). Functionally, allows the formation of correctly charged Asn-tRNA(Asn) or Gln-tRNA(Gln) through the transamidation of misacylated Asp-tRNA(Asn) or Glu-tRNA(Gln) in organisms which lack either or both of asparaginyl-tRNA or glutaminyl-tRNA synthetases. The reaction takes place in the presence of glutamine and ATP through an activated phospho-Asp-tRNA(Asn) or phospho-Glu-tRNA(Gln). In Paenarthrobacter aurescens (strain TC1), this protein is Aspartyl/glutamyl-tRNA(Asn/Gln) amidotransferase subunit B.